The sequence spans 508 residues: MGLPWYRVHTVVLNDPGRLLSVHIMHTALVAGWAGSMALYELAVFDPSDPVLDPMWRQGMFVIPFMTRLGITNSWGGWSITGGTITNPGIWSYEGVAGAHIVFSGLCFLAAIWHWVYWDLEIFCDERTGKPSLDLPKIFGIHLFLSGVACFGFGAFHVTGLYGPGIWVSDPYGLTGKVQPVNPAWGVEGFDPFVPGGIASHHIAAGTLGILAGLFHLSVRPPQRLYKGLRMGNIETVLSSSIAAVFFAAFVVAGTMWYGSATTPIELFGPTRYQWDQGYFQQEIYRRVGAGLAKNQSLSEAWSKIPEKLAFYDYIGNNPAKGGLFRAGSMDNGDGIAVGWLGHPIFRDKEGRELFVRRMPTFFETFPVVLVDGDGIVRADVPFRRAESKYSVEQVGVTVEFYGGELNGVSYSDPATVKKYARRAQLGEIFELDRATLKSDGVFRSSPRGWFTFGHASFALLFFFGHIWHGARTLFRDVFAGIDPDLDAQVEFGAFQKLGDPTTRRQVV.

6 consecutive transmembrane segments (helical) span residues 21-36 (SVHI…WAGS), 101-115 (IVFS…IWHW), 140-156 (GIHL…FGAF), 203-218 (IAAG…FHLS), 237-252 (VLSS…AFVV), and 457-472 (SFAL…HGAR).

It belongs to the PsbB/PsbC family. PsbB subfamily. As to quaternary structure, PSII is composed of 1 copy each of membrane proteins PsbA, PsbB, PsbC, PsbD, PsbE, PsbF, PsbH, PsbI, PsbJ, PsbK, PsbL, PsbM, PsbT, PsbX, PsbY, PsbZ, Psb30/Ycf12, at least 3 peripheral proteins of the oxygen-evolving complex and a large number of cofactors. It forms dimeric complexes. Binds multiple chlorophylls. PSII binds additional chlorophylls, carotenoids and specific lipids. serves as cofactor.

It localises to the plastid. Its subcellular location is the chloroplast thylakoid membrane. One of the components of the core complex of photosystem II (PSII). It binds chlorophyll and helps catalyze the primary light-induced photochemical processes of PSII. PSII is a light-driven water:plastoquinone oxidoreductase, using light energy to abstract electrons from H(2)O, generating O(2) and a proton gradient subsequently used for ATP formation. This chain is Photosystem II CP47 reaction center protein, found in Eucalyptus globulus subsp. globulus (Tasmanian blue gum).